Here is a 159-residue protein sequence, read N- to C-terminus: Ribosomal RNA large subunit methyltransferase H (159 aa).

S-adenosyl-L-methionine-binding positions include Leu76, Gly108, and 127–132 (FGKLTL).

Belongs to the RNA methyltransferase RlmH family. Homodimer.

The protein localises to the cytoplasm. It carries out the reaction pseudouridine(1915) in 23S rRNA + S-adenosyl-L-methionine = N(3)-methylpseudouridine(1915) in 23S rRNA + S-adenosyl-L-homocysteine + H(+). Functionally, specifically methylates the pseudouridine at position 1915 (m3Psi1915) in 23S rRNA. The sequence is that of Ribosomal RNA large subunit methyltransferase H from Streptococcus sanguinis (strain SK36).